A 287-amino-acid chain; its full sequence is Energy-coupling factor transporter ATP-binding protein EcfA2 (287 aa).

An ABC transporter domain is found at 3 to 245 (IKFENVSYVY…SEWLQKHHLA (243 aa)). 40-47 (GHTGSGKS) contributes to the ATP binding site.

The protein belongs to the ABC transporter superfamily. Energy-coupling factor EcfA family. Forms a stable energy-coupling factor (ECF) transporter complex composed of 2 membrane-embedded substrate-binding proteins (S component), 2 ATP-binding proteins (A component) and 2 transmembrane proteins (T component).

It localises to the cell membrane. Its function is as follows. ATP-binding (A) component of a common energy-coupling factor (ECF) ABC-transporter complex. Unlike classic ABC transporters this ECF transporter provides the energy necessary to transport a number of different substrates. The polypeptide is Energy-coupling factor transporter ATP-binding protein EcfA2 (Lactobacillus delbrueckii subsp. bulgaricus (strain ATCC 11842 / DSM 20081 / BCRC 10696 / JCM 1002 / NBRC 13953 / NCIMB 11778 / NCTC 12712 / WDCM 00102 / Lb 14)).